Consider the following 957-residue polypeptide: MTPLLFPLLLASLLPSSSCNKANKHKPWIEAEYQGIVMENDNTVLLNPPLFALDKDAPLRYAGEICGFRLHGSGVPFEAVILDKATGEGLIRAKEPVDCEAQKEHTFTIQAYDCGEGPDGANTKKSHKATVHVRVNDVNEFAPVFVERLYRAAVTEGKLYDRILRVEAIDGDCSPQYSQICYYEILTPNTPFLIDNDGNIENTEKLQYSGEKLYKFTVTAYDCGKKRAADDAEVEIQVKPTCKPSWQGWNKRIEYAPGAGSLALFPGIRLETCDEPLWNIQATIELQTSHVAKGCDRDNYSERALRKLCGAAPGEVDLLPMPGPNANWTAGLSVHYSQDSSLIYWFNGTQAVQVPLGGAAGLGSGPPDSLSDHFTLSFWMKHGVTPNKGKKEEETIVCNTVQNEDGFSHYSLTVHGCRIAFLYWPLLESARPVKFLWKLEQVCDDEWHHYALNLEFPTVTLYADGISFDPALIHDNGLIHPPRREPALMIGACWAEEKNKEKEKGGDNSTDATAGDPLPIHHYFHGYLAGFSVRSGRLESREVIECLYACREGLDYRDFESLGKGMKVHVNPSQSLLTLEGDDVETFNHALQHVAYMNTLRFATPGVRPLRLTTAVKCFSEESCVSIPEVEGYVVVLQPDAPQILLSGTAHFARPAVDFEGPEGVPLFPDLQITCSISHQVEAKKDESWQGTVTDTRMSDEIVHNLDGCEISLVGDDLDPERESLLLDMASLQQRGLELTNTSAYLTIAGVESITVYEEILRQARYRLRHGAALYARKFRLSCSEMNGRYSSNEFIVEVSVLHSVNRVAHPSHMLSSQQFLHRGHQPPPEMAGHSLASSHRNSMVPSAATLIIVVCVGFLVLMVVLGLVRIHSLHRRVSGASGPPGASSDPKDPDLFWDDSALTIIVNPMESYQSRQVCVAGAAGGQQDDEDSSDSEAADSPSSDERRIIETPPHRY.

An N-terminal signal peptide occupies residues 1–19; sequence MTPLLFPLLLASLLPSSSC. The Extracellular portion of the chain corresponds to 20-848; the sequence is NKANKHKPWI…SHRNSMVPSA (829 aa). Cadherin domains follow at residues 29-145 and 146-246; these read IEAE…APVF and VERL…KPSW. N-linked (GlcNAc...) asparagine glycans are attached at residues N299, N347, and N508. Residues 849–869 form a helical membrane-spanning segment; sequence ATLIIVVCVGFLVLMVVLGLV. Over 870–957 the chain is Cytoplasmic; it reads RIHSLHRRVS…RIIETPPHRY (88 aa). Residues 919-957 are disordered; it reads CVAGAAGGQQDDEDSSDSEAADSPSSDERRIIETPPHRY. A compositionally biased stretch (acidic residues) spans 928–938; that stretch reads QDDEDSSDSEA. The span at 944–957 shows a compositional bias: basic and acidic residues; that stretch reads SDERRIIETPPHRY.

The protein belongs to the calsyntenin family. In terms of assembly, interacts (via cadherin domains) with both alpha and beta isoforms of neurexins (NRXN1, NRXN2 and NRXN3). Directly interacts with APBA2. Forms a tripartite complex with APBA2 and APP. Interacts with low affinity with KLC1. Interacts with SLC23A2/SVCT2. Proteolytically processed under normal cellular conditions. A primary zeta-cleavage generates a large extracellular (soluble) N-terminal domain (sAlc) and a short C-terminal transmembrane fragment (CTF1). A secondary cleavage catalyzed by gamma-secretase within the transmembrane domain releases the beta-Alc-beta chain in the extracellular milieu and produces an intracellular fragment (AlcICD). This processing is strongly suppressed in the tripartite complex formed with APBA2 and APP, which seems to prevent the association with gamma-secretase.

It localises to the postsynaptic cell membrane. The protein localises to the endoplasmic reticulum membrane. It is found in the golgi apparatus membrane. Its subcellular location is the cell projection. The protein resides in the dendrite. In terms of biological role, postsynaptic adhesion molecule that binds to presynaptic neurexins to mediate both excitatory and inhibitory synapse formation. Promotes synapse development by acting as a cell adhesion molecule at the postsynaptic membrane, which associates with both neurexin-alpha and neurexin-beta proteins at the presynaptic membrane. Regulates the balance between excitatory and inhibitory synapses by inhibiting formation of excitatory parallel-fiber synapses and promoting formation of inhibitory synapses in the same neuron. May also be involved in ascorbate (vitamin C) uptake via its interaction with SLC23A2/SVCT2. Complex formation with APBA2 and APP, stabilizes APP metabolism and enhances APBA2-mediated suppression of beta-APP40 secretion, due to the retardation of intracellular APP maturation. This is Calsyntenin-3 (CLSTN3) from Bos taurus (Bovine).